Consider the following 418-residue polypeptide: Phosphoglycerate kinase (418 aa).

Residues valine 24, aspartate 25, phenylalanine 26, asparagine 27, arginine 40, serine 63, histidine 64, glycine 66, arginine 67, leucine 122, arginine 123, histidine 169, and arginine 170 each coordinate (2R)-3-phosphoglycerate. Position 213 (glycine 213) interacts with ADP. Residue glycine 213 coordinates CDP. Residues alanine 214 and lysine 215 each contribute to the AMP site. Alanine 214 is an ATP binding site. Position 214 (alanine 214) interacts with Mg(2+). Residues alanine 217 and aspartate 218 each coordinate Mg(2+). Position 218 (aspartate 218) interacts with CDP. Residue lysine 219 coordinates AMP. An ATP-binding site is contributed by lysine 219. Position 237 (glycine 237) interacts with ADP. A CDP-binding site is contributed by glycine 237. Positions 238 and 312 each coordinate AMP. Residues glycine 238 and glycine 312 each contribute to the ATP site. CDP-binding residues include glycine 337 and phenylalanine 342. Position 342 (phenylalanine 342) interacts with ADP. Residue glutamate 343 participates in AMP binding. ATP contacts are provided by glutamate 343, aspartate 374, and threonine 375. Aspartate 374 contacts Mg(2+).

This sequence belongs to the phosphoglycerate kinase family. As to quaternary structure, monomer. Mg(2+) serves as cofactor.

It catalyses the reaction (2R)-3-phosphoglycerate + ATP = (2R)-3-phospho-glyceroyl phosphate + ADP. It functions in the pathway carbohydrate degradation; glycolysis; pyruvate from D-glyceraldehyde 3-phosphate: step 2/5. The chain is Phosphoglycerate kinase (PGK) from Euplotes crassus.